Consider the following 225-residue polypeptide: Small ribosomal subunit protein uS7 (225 aa).

N-acetylserine is present on S2. Position 27 is a phosphothreonine (T27). Glycyl lysine isopeptide (Lys-Gly) (interchain with G-Cter in ubiquitin) cross-links involve residues K45 and K203.

It belongs to the universal ribosomal protein uS7 family. In terms of assembly, component of the small ribosomal subunit (SSU). Mature yeast ribosomes consist of a small (40S) and a large (60S) subunit. The 40S small subunit contains 1 molecule of ribosomal RNA (18S rRNA) and 33 different proteins (encoded by 57 genes). The large 60S subunit contains 3 rRNA molecules (25S, 5.8S and 5S rRNA) and 46 different proteins (encoded by 81 genes). In terms of processing, N-terminally acetylated by acetyltransferase NatA.

Its subcellular location is the cytoplasm. Its function is as follows. Component of the ribosome, a large ribonucleoprotein complex responsible for the synthesis of proteins in the cell. The small ribosomal subunit (SSU) binds messenger RNAs (mRNAs) and translates the encoded message by selecting cognate aminoacyl-transfer RNA (tRNA) molecules. The large subunit (LSU) contains the ribosomal catalytic site termed the peptidyl transferase center (PTC), which catalyzes the formation of peptide bonds, thereby polymerizing the amino acids delivered by tRNAs into a polypeptide chain. The nascent polypeptides leave the ribosome through a tunnel in the LSU and interact with protein factors that function in enzymatic processing, targeting, and the membrane insertion of nascent chains at the exit of the ribosomal tunnel. This is Small ribosomal subunit protein uS7 from Saccharomyces cerevisiae (strain ATCC 204508 / S288c) (Baker's yeast).